Consider the following 462-residue polypeptide: Myb-like transcriptional regulator mfmK (462 aa).

HTH myb-type domains follow at residues 1 to 54 (MARL…WWNS), 56 to 110 (ADGT…DPGI), and 113 to 162 (CDWT…LKHE). 3 DNA-binding regions (H-T-H motif) span residues 32–52 (WRDL…RRWW), 83–106 (WSRV…SQVL), and 134–158 (WATI…STLR). Basic and acidic residues predominate over residues 159 to 175 (LKHENESKRESTIRKSV). 3 disordered regions span residues 159–184 (LKHE…NFEP), 216–262 (DEEE…VDNG), and 374–408 (STTT…RTSI). Residues 216–235 (DEEEDDDDDDEDNEEDDGDD) are compositionally biased toward acidic residues. 2 stretches are compositionally biased toward polar residues: residues 374–385 (STTTGMDSSSAP) and 396–408 (FGTS…RTSI).

It localises to the nucleus. Functionally, myb-like transcriptional regulator; part of the gene cluster that mediates the biosynthesis of the phthalide-terpenoid hybrid 11'-O-desmethylfendlerol. The chain is Myb-like transcriptional regulator mfmK from Annulohypoxylon moriforme (Filamentous fungus).